The sequence spans 356 residues: Calcium/calmodulin-dependent protein kinase type 1 (356 aa).

The Nuclear localization signal signature appears at 2–7 (PLFKRR). One can recognise a Protein kinase domain in the interval 22-278 (YDFRDVLGTG…CQSALEHPWI (257 aa)). ATP is bound by residues 28–36 (LGTGAFSKV) and K52. The active-site Proton acceptor is D144. The residue at position 179 (T179) is a Phosphothreonine; by ckk-1. Residues 278 to 318 (ISGNTAYTHDIHRTVAVHLKKSLAKRNWKKAFNAAAAIRQL) form an autoinhibitory domain region. A calmodulin-binding region spans residues 298 to 319 (KSLAKRNWKKAFNAAAAIRQLQ).

This sequence belongs to the protein kinase superfamily. CAMK Ser/Thr protein kinase family. CaMK subfamily. It depends on Mg(2+) as a cofactor.

It is found in the nucleus. The protein localises to the cytoplasm. The enzyme catalyses L-seryl-[protein] + ATP = O-phospho-L-seryl-[protein] + ADP + H(+). The catalysed reaction is L-threonyl-[protein] + ATP = O-phospho-L-threonyl-[protein] + ADP + H(+). Activated by Ca(2+)/calmodulin. Binding of calmodulin results in a conformational change that generates functional binding sites for both substrate and ATP, and thus relieves autoinhibition and lowers the Km of substrate binding. Must be phosphorylated by ckk-1 to be maximally active but this does not appear to be required for activity in AFD neurons. Functionally, calcium/calmodulin-dependent protein kinase that operates in the calcium-triggered CaMKK-CaMK1 signaling cascade which results in transcriptional activation. Transcriptional activation occurs at least in part through phosphorylation of crh-1. Regulates gene expression, sensory morphology, and function of the AFD thermosensory neurons. Involved in long-term adaptation of AFD neurons to temperatures warmer than the initial acclimatized cultivation temperature. Acts in the FLP thermal nociceptors to moderate the responsiveness to noxious heat and controls neuropeptide release from FLP neurons in response to temperature elevations. Regulates the dauer decision, the decision of the larvae to enter into the alternative stress-resistant and long-lived dauer developmental stage, based on the feeding state, primarily in the AWC sensory neurons. Acts non cell-autonomously in the AWC neurons to regulate expression of the daf-28 insulin-like peptide and cell-autonomously in the ASI sensory neurons to regulate expression of the growth promoting daf-7 in a food-regulated manner. Plays a role in memory-based thermal response of an individual AFD neuron cell. Involved in chemotaxis response in AWC neurons to attractant 2-heptanone, a volatile organic compound emitted by the nematode pathogenic bacterium B.nematocida B16. Represses transcription of glutamate receptor glr-1 in the nucleus basally and in response to change in synaptic activity. This Caenorhabditis briggsae protein is Calcium/calmodulin-dependent protein kinase type 1 (cmk-1).